Here is a 253-residue protein sequence, read N- to C-terminus: BRI3-binding protein (253 aa).

4 helical membrane-spanning segments follow: residues 19–39 (VLLPVLLLALLLLALVAPGAQ), 131–151 (ALVLVGVVLLAYWFLSLTLGF), 164–181 (FWLVRVILFSMSCVYILH), and 190–210 (AVLPLCVVVAIYFMTGPMGYW). Residues 219-253 (SPSVEEKLEHLENQVRLLNIRLNRVLENLDRSKDK) are a coiled coil. Position 250 is a phosphoserine (serine 250).

As to quaternary structure, interacts with LETMD1. Interacts with BRI3. Interacts with BRI3; the interaction is weak. Interacts with TMEM238L.

It localises to the mitochondrion outer membrane. Its function is as follows. Involved in tumorigenesis and may function by stabilizing p53/TP53. The chain is BRI3-binding protein from Mus musculus (Mouse).